We begin with the raw amino-acid sequence, 456 residues long: NADH oxidase (456 aa).

Residue N10 coordinates FAD. H11 acts as the Proton acceptor in catalysis. Positions 12, 34, 35, 44, 81, 110, 113, 143, and 170 each coordinate FAD. Catalysis depends on C44, which acts as the Redox-active. Residue C44 is modified to Cysteine sulfinic acid (-SO2H). 4 residues coordinate NAD(+): I171, D190, Y199, and G254. Residue D292 coordinates FAD. A308 contacts NAD(+). FAD contacts are provided by L309, A310, and S311. G339 lines the NAD(+) pocket. F436 serves as a coordination point for FAD.

FAD serves as cofactor.

The enzyme catalyses 2 NADH + O2 + 2 H(+) = 2 NAD(+) + 2 H2O. In terms of biological role, catalyzes the four-electron reduction of molecular oxygen to water. This Streptococcus pyogenes serotype M6 (strain ATCC BAA-946 / MGAS10394) protein is NADH oxidase.